The chain runs to 1178 residues: DNA-directed RNA polymerase subunit beta' (1178 aa).

The Zn(2+) site is built by C60, C62, C75, and C78. Mg(2+) contacts are provided by D450, D452, and D454. The Zn(2+) site is built by C795, C869, C876, and C879.

This sequence belongs to the RNA polymerase beta' chain family. The RNAP catalytic core consists of 2 alpha, 1 beta, 1 beta' and 1 omega subunit. When a sigma factor is associated with the core the holoenzyme is formed, which can initiate transcription. The cofactor is Mg(2+). It depends on Zn(2+) as a cofactor.

The catalysed reaction is RNA(n) + a ribonucleoside 5'-triphosphate = RNA(n+1) + diphosphate. Its function is as follows. DNA-dependent RNA polymerase catalyzes the transcription of DNA into RNA using the four ribonucleoside triphosphates as substrates. The polypeptide is DNA-directed RNA polymerase subunit beta' (Clostridium botulinum (strain Okra / Type B1)).